A 123-amino-acid polypeptide reads, in one-letter code: Small ribosomal subunit protein uS11 (123 aa).

It belongs to the universal ribosomal protein uS11 family. In terms of assembly, part of the 30S ribosomal subunit. Interacts with proteins S7 and S18. Binds to IF-3.

In terms of biological role, located on the platform of the 30S subunit, it bridges several disparate RNA helices of the 16S rRNA. Forms part of the Shine-Dalgarno cleft in the 70S ribosome. The polypeptide is Small ribosomal subunit protein uS11 (Coxiella burnetii (strain CbuK_Q154) (Coxiella burnetii (strain Q154))).